A 492-amino-acid polypeptide reads, in one-letter code: SH2 domain-containing adapter protein E (492 aa).

4 disordered regions span residues 46-193 (TASE…DKAK), 214-236 (KRTK…EPYD), 260-332 (LDGP…EQPW), and 347-384 (FEGS…KVDP). Ser103 is modified (phosphoserine). Residues 149–158 (IKVDTQEKNG) are compositionally biased toward basic and acidic residues. Residues 168–184 (TSSSSSSSSSASSSPSS) are compositionally biased toward low complexity. 5 stretches are compositionally biased toward basic and acidic residues: residues 214–227 (KRTK…RVGE), 268–285 (ETVK…KDLL), 306–332 (AEVK…EQPW), 349–361 (GSDR…DAGR), and 373–383 (LSDHGDGEKVD). The SH2 domain occupies 393–488 (WYHGSISRAE…AEHMTLLHPV (96 aa)).

As to expression, expressed in heart, brain, lung and skeletal muscle.

The chain is SH2 domain-containing adapter protein E (She) from Mus musculus (Mouse).